The primary structure comprises 201 residues: UPF0301 protein RER_60040 (201 aa).

This sequence belongs to the UPF0301 (AlgH) family.

The sequence is that of UPF0301 protein RER_60040 from Rhodococcus erythropolis (strain PR4 / NBRC 100887).